The primary structure comprises 144 residues: Transcription antitermination protein NusB (144 aa).

The protein belongs to the NusB family.

Its function is as follows. Involved in transcription antitermination. Required for transcription of ribosomal RNA (rRNA) genes. Binds specifically to the boxA antiterminator sequence of the ribosomal RNA (rrn) operons. The sequence is that of Transcription antitermination protein NusB from Pelotomaculum thermopropionicum (strain DSM 13744 / JCM 10971 / SI).